Consider the following 1347-residue polypeptide: Protocadherin-11 X-linked (1347 aa).

The signal sequence occupies residues 1–23; sequence MDLLSGTYIFAVLLACVVFHSGA. The Extracellular portion of the chain corresponds to 24-812; that stretch reads QEKNYTIREE…VSSPTSDYVK (789 aa). Cadherin domains are found at residues 26 to 139, 140 to 249, 250 to 355, 362 to 466, 467 to 570, 571 to 673, and 677 to 795; these read KNYT…APLF, PATV…HPVF, KETE…VPSI, NPVN…APVF, TQSF…SPVF, THNE…KPVF, and PSNC…APVT. Asn27, Asn48, and Asn54 each carry an N-linked (GlcNAc...) asparagine glycan. Residue Asn344 is glycosylated (N-linked (GlcNAc...) asparagine). The N-linked (GlcNAc...) asparagine glycan is linked to Asn553. Residue Asn773 is glycosylated (N-linked (GlcNAc...) asparagine). The helical transmembrane segment at 813 to 833 threads the bilayer; that stretch reads ILVAAVAGTITVVVVIFITAV. Over 834–1347 the chain is Cytoplasmic; sequence VRCRQAPHLK…DSPIMEEHPL (514 aa). 3 disordered regions span residues 1057-1091, 1097-1116, and 1326-1347; these read LPEGSQESSSDGGLGDHDAGSLTSTSHGLPLGYPQ, RATPSNRTEGDGNSDPESTF, and FTPRQQARPSRGDSPIMEEHPL.

In terms of tissue distribution, expressed strongly in fetal brain and brain (cortex, amygdala, thalamus, substantia nigra, hippocampus, caudate nucleus and corpus callosum). Expressed at low level in testis.

The protein localises to the cell membrane. In terms of biological role, potential calcium-dependent cell-adhesion protein. This is Protocadherin-11 X-linked (PCDH11X) from Homo sapiens (Human).